The sequence spans 240 residues: Biosynthetic peptidoglycan transglycosylase (240 aa).

A helical membrane pass occupies residues 15–35; sequence WMFYLGAVVAIAWLATQAFYF.

Belongs to the glycosyltransferase 51 family.

The protein resides in the cell inner membrane. It catalyses the reaction [GlcNAc-(1-&gt;4)-Mur2Ac(oyl-L-Ala-gamma-D-Glu-L-Lys-D-Ala-D-Ala)](n)-di-trans,octa-cis-undecaprenyl diphosphate + beta-D-GlcNAc-(1-&gt;4)-Mur2Ac(oyl-L-Ala-gamma-D-Glu-L-Lys-D-Ala-D-Ala)-di-trans,octa-cis-undecaprenyl diphosphate = [GlcNAc-(1-&gt;4)-Mur2Ac(oyl-L-Ala-gamma-D-Glu-L-Lys-D-Ala-D-Ala)](n+1)-di-trans,octa-cis-undecaprenyl diphosphate + di-trans,octa-cis-undecaprenyl diphosphate + H(+). It participates in cell wall biogenesis; peptidoglycan biosynthesis. Its function is as follows. Peptidoglycan polymerase that catalyzes glycan chain elongation from lipid-linked precursors. The polypeptide is Biosynthetic peptidoglycan transglycosylase (Paraburkholderia xenovorans (strain LB400)).